The sequence spans 239 residues: LexA repressor (239 aa).

Positions 26–46 (FDEMKDALDLASKSGIHRLIT) form a DNA-binding region, H-T-H motif. Residues S159 and K197 each act as for autocatalytic cleavage activity in the active site.

The protein belongs to the peptidase S24 family. Homodimer.

It carries out the reaction Hydrolysis of Ala-|-Gly bond in repressor LexA.. Its function is as follows. Represses a number of genes involved in the response to DNA damage (SOS response), including recA and lexA. In the presence of single-stranded DNA, RecA interacts with LexA causing an autocatalytic cleavage which disrupts the DNA-binding part of LexA, leading to derepression of the SOS regulon and eventually DNA repair. This Rhizobium etli (strain ATCC 51251 / DSM 11541 / JCM 21823 / NBRC 15573 / CFN 42) protein is LexA repressor.